A 145-amino-acid chain; its full sequence is 3-dehydroquinate dehydratase (145 aa).

Tyrosine 24 serves as the catalytic Proton acceptor. Residues asparagine 75, histidine 81, and aspartate 88 each contribute to the substrate site. The Proton donor role is filled by histidine 101. Residues 102–103 (IS) and arginine 112 contribute to the substrate site.

It belongs to the type-II 3-dehydroquinase family. In terms of assembly, homododecamer.

It carries out the reaction 3-dehydroquinate = 3-dehydroshikimate + H2O. It participates in metabolic intermediate biosynthesis; chorismate biosynthesis; chorismate from D-erythrose 4-phosphate and phosphoenolpyruvate: step 3/7. In terms of biological role, catalyzes a trans-dehydration via an enolate intermediate. This chain is 3-dehydroquinate dehydratase, found in Corynebacterium glutamicum (strain R).